The chain runs to 66 residues: UPF0370 protein YpfN (66 aa).

The chain crosses the membrane as a helical span at residues 4–24 (LAKYWWILVIVFLVGVLLNVI). The segment at 39–66 (KPELPPHRDFNDKWDDDDDWPKKDQPKK) is disordered. Basic and acidic residues predominate over residues 42–51 (LPPHRDFNDK).

Belongs to the UPF0370 family.

It localises to the cell membrane. The chain is UPF0370 protein YpfN from Escherichia coli O139:H28 (strain E24377A / ETEC).